The following is a 607-amino-acid chain: Phosphatidylinositol 4-kinase LSB6 (607 aa).

Residues 73–88 (NVPSESPRPDQTSGSN) are compositionally biased toward polar residues. The interval 73-93 (NVPSESPRPDQTSGSNPAVGL) is disordered. The PI3K/PI4K catalytic domain occupies 161–522 (GRELERIQTG…LVRRTRCQVI (362 aa)). Residues 167-173 (IQTGSSG) are G-loop. The tract at residues 318–356 (KSSGEDINHKPETTRNLTDETEPSKQINSSPISTESEEN) is disordered. The span at 319–330 (SSGEDINHKPET) shows a compositional bias: basic and acidic residues. Residues 341 to 351 (SKQINSSPIST) are compositionally biased toward polar residues. The catalytic loop stretch occupies residues 384–392 (RNTDRGLDN). The segment at 411-431 (AIDNGLSFPWKHPDEWRLYPY) is activation loop.

It belongs to the PI3/PI4-kinase family. In terms of assembly, interacts with LAS17. Mg(2+) serves as cofactor. The cofactor is Mn(2+).

Its subcellular location is the cell membrane. It is found in the vacuole membrane. The catalysed reaction is a 1,2-diacyl-sn-glycero-3-phospho-(1D-myo-inositol) + ATP = a 1,2-diacyl-sn-glycero-3-phospho-(1D-myo-inositol 4-phosphate) + ADP + H(+). May play a role in endocytic and/or exocytic pathways. In Saccharomyces cerevisiae (strain ATCC 204508 / S288c) (Baker's yeast), this protein is Phosphatidylinositol 4-kinase LSB6 (LSB6).